The following is a 583-amino-acid chain: Propane 2-monooxygenase operon transcriptional activator MimR (583 aa).

The Sigma-54 factor interaction domain maps to 320–513 (LAGQSSSFRR…LRHVLTETVR (194 aa)). ATP is bound by residues 349 to 356 (ERGSGRTY) and 395 to 404 (SADFAVIVSD).

Its function is as follows. Acts as a transcriptional activator of the mimABCD operon encoding the propane 2-monooxygenase complex. In Mycolicibacterium smegmatis (strain ATCC 700084 / mc(2)155) (Mycobacterium smegmatis), this protein is Propane 2-monooxygenase operon transcriptional activator MimR.